A 666-amino-acid chain; its full sequence is MSKSKHAVELCSLLVDDIYGELSSRIFTILLRRGRLPMNALKRHTQLTTRQLKLGLTVLVRQNLVYHNSEGSDTHYEANIDAAYALVRSGKILEIAEERFGSVAAEIMGQLVLLGHAKISDIIAELNKNHEPHANGNSNETNGATNGNGVHSYPSGQLNHTLIQLLEEGFIQPVGQNMFRSPTDSYNAVEKALLQDSYGGATRGTKQKDELRMRIRGQLQELRAQVPNWKPVGYNRSSTNGHTNDIASKRRRLSHSGGATNGYDFGDDESSKLDGNLVLRINHEKCTVFMRNRRLVELANSRIGVTTSYIYAELLRLMAEQIPRCRPDPRIDDAVDDADGPSIIITTQELTDALSKTINVSTGIGKATSQKIDTSRLDKLQNGRKRKAQDEAEVEGVASSDEESEDDHKPFTNGNGHAMDVDEDDPFSDQPGANTSKRAVTFKDRDRTPPPTESRQARMMHVMSHLQLLAADDCQLLRKCGARQMGEWTVDFERVIDRLRESELDSIIYENFGQIGHRLVRVMRKMGKLEEKHIAKLALIKQQDSRTTLVNMQMHGMVDIQEVPRDTGRMIVRTIHLWFCDEDRVTSLLLDRTYKAMSRCLQRLDVEKRRKANIIALSERTDVQGQEEAFLRPEQMNQLREIRAKEEDLLGQICRLDELVGIFQDY.

Disordered stretches follow at residues 130 to 153 (HEPH…VHSY) and 375 to 455 (SRLD…TESR). Positions 135-153 (NGNSNETNGATNGNGVHSY) are enriched in polar residues. The segment at 593–614 (TYKAMSRCLQRLDVEKRRKANI) is leucine-zipper.

The protein belongs to the RNA polymerase beta chain family. In terms of assembly, component of the RNA polymerase III (Pol III) complex consisting of 17 subunits.

The protein localises to the nucleus. DNA-dependent RNA polymerase catalyzes the transcription of DNA into RNA using the four ribonucleoside triphosphates as substrates. Specific core component of RNA polymerase III which synthesizes small RNAs, such as 5S rRNA and tRNAs. The polypeptide is DNA-directed RNA polymerase III subunit rpc3 (rpc82) (Botryotinia fuckeliana (strain B05.10) (Noble rot fungus)).